The primary structure comprises 357 residues: Alanine racemase (357 aa).

Lys33 acts as the Proton acceptor; specific for D-alanine in catalysis. Residue Lys33 is modified to N6-(pyridoxal phosphate)lysine. Arg129 contributes to the substrate binding site. Tyr253 serves as the catalytic Proton acceptor; specific for L-alanine. Met301 contacts substrate.

It belongs to the alanine racemase family. As to quaternary structure, homodimer. Pyridoxal 5'-phosphate is required as a cofactor.

The catalysed reaction is L-alanine = D-alanine. It participates in amino-acid biosynthesis; D-alanine biosynthesis; D-alanine from L-alanine: step 1/1. Its function is as follows. Catalyzes the interconversion of L-alanine and D-alanine. Is highly specific for alanine as substrate. May serve both anabolic and catabolic purposes. This is Alanine racemase from Pseudomonas taetrolens.